Here is a 264-residue protein sequence, read N- to C-terminus: Thymidylate synthase (264 aa).

Residues R21 and 126-127 (RR) each bind dUMP. Catalysis depends on C146, which acts as the Nucleophile. Residues 166 to 169 (RSAD), N177, and 207 to 209 (HLY) each bind dUMP. Residue D169 coordinates (6R)-5,10-methylene-5,6,7,8-tetrahydrofolate. A263 provides a ligand contact to (6R)-5,10-methylene-5,6,7,8-tetrahydrofolate.

It belongs to the thymidylate synthase family. Bacterial-type ThyA subfamily. As to quaternary structure, homodimer.

Its subcellular location is the cytoplasm. The catalysed reaction is dUMP + (6R)-5,10-methylene-5,6,7,8-tetrahydrofolate = 7,8-dihydrofolate + dTMP. Its pathway is pyrimidine metabolism; dTTP biosynthesis. Its function is as follows. Catalyzes the reductive methylation of 2'-deoxyuridine-5'-monophosphate (dUMP) to 2'-deoxythymidine-5'-monophosphate (dTMP) while utilizing 5,10-methylenetetrahydrofolate (mTHF) as the methyl donor and reductant in the reaction, yielding dihydrofolate (DHF) as a by-product. This enzymatic reaction provides an intracellular de novo source of dTMP, an essential precursor for DNA biosynthesis. The polypeptide is Thymidylate synthase (Rhodopseudomonas palustris (strain HaA2)).